The primary structure comprises 382 residues: Albumin (382 aa).

Albumin domains are found at residues 1 to 178 and 179 to 377; these read KCRI…ILLE and AALK…GLLQ. 12 cysteine pairs are disulfide-bonded: Cys-2–Cys-48, Cys-47–Cys-55, Cys-67–Cys-81, Cys-80–Cys-91, Cys-116–Cys-161, Cys-160–Cys-169, Cys-192–Cys-238, Cys-237–Cys-248, Cys-261–Cys-277, Cys-276–Cys-287, Cys-314–Cys-359, and Cys-358–Cys-367. Residues Asp-51 and Glu-54 each coordinate Ca(2+). Asp-51 lines the Zn(2+) pocket.

It belongs to the ALB/AFP/VDB family. Plasma.

It is found in the secreted. In terms of biological role, serum albumin, the main protein of plasma, has a good binding capacity for water, Ca(2+), Na(+), K(+), fatty acids, hormones, bilirubin and drugs. Its main function is the regulation of the colloidal osmotic pressure of blood. This chain is Albumin (ALB), found in Aquarana catesbeiana (American bullfrog).